Here is a 27-residue protein sequence, read N- to C-terminus: NEDCTPWTSTLIXPLPXCRNYVXXQAC.

It belongs to the protease inhibitor I6 (cereal trypsin/alpha-amylase inhibitor) family. As to expression, developing endosperm.

It is found in the secreted. Functionally, alpha-amylase/trypsin inhibitor. It could be involved in insect defense mechanisms. The sequence is that of Alpha-amylase/trypsin inhibitor CM17 from Triticum aestivum (Wheat).